Reading from the N-terminus, the 646-residue chain is Mitochondrial distribution and morphology protein 10 (646 aa).

Disordered regions lie at residues 206–230 and 315–347; these read KSTSSSMDRLDSSNPSLSSSTSLSN and ETSSSASYPQRNGSVLHTGSSSSSEDTEAGGGL. Low complexity predominate over residues 207–230; sequence STSSSMDRLDSSNPSLSSSTSLSN. The segment covering 315–333 has biased composition (polar residues); sequence ETSSSASYPQRNGSVLHTG.

It belongs to the MDM10 family. As to quaternary structure, component of the ER-mitochondria encounter structure (ERMES) or MDM complex, composed of MMM1, MDM10, MDM12 and MDM34. Associates with the mitochondrial outer membrane sorting assembly machinery SAM(core) complex.

It localises to the mitochondrion outer membrane. Component of the ERMES/MDM complex, which serves as a molecular tether to connect the endoplasmic reticulum and mitochondria. Components of this complex are involved in the control of mitochondrial shape and protein biogenesis and may function in phospholipid exchange. MDM10 is involved in the late assembly steps of the general translocase of the mitochondrial outer membrane (TOM complex). Functions in the TOM40-specific route of the assembly of outer membrane beta-barrel proteins, including the association of TOM40 with the receptor TOM22 and small TOM proteins. Can associate with the SAM(core) complex as well as the MDM12-MMM1 complex, both involved in late steps of the major beta-barrel assembly pathway, that is responsible for biogenesis of all outer membrane beta-barrel proteins. May act as a switch that shuttles between both complexes and channels precursor proteins into the TOM40-specific pathway. Plays a role in mitochondrial morphology and in the inheritance of mitochondria. The chain is Mitochondrial distribution and morphology protein 10 from Mycosarcoma maydis (Corn smut fungus).